We begin with the raw amino-acid sequence, 601 residues long: ATP-dependent lipid A-core flippase (601 aa).

The 301-residue stretch at 28 to 328 (LLSVVGLIVY…LTRVNAEFQR (301 aa)) folds into the ABC transmembrane type-1 domain. Transmembrane regions (helical) follow at residues 32–52 (VGLI…GPFI), 81–101 (VLLM…FANF), 160–180 (ALIS…LMFY), 183–203 (WKLS…ITIV), 267–287 (AVSQ…VLYA), and 296–316 (DLTA…LQPI). The 238-residue stretch at 360–597 (LRFDNVSFSY…GGMYAKLYQM (238 aa)) folds into the ABC transporter domain. 394 to 401 (GRSGSGKS) is a binding site for ATP.

Belongs to the ABC transporter superfamily. Lipid exporter (TC 3.A.1.106) family. As to quaternary structure, homodimer.

The protein localises to the cell inner membrane. It carries out the reaction ATP + H2O + lipid A-core oligosaccharideSide 1 = ADP + phosphate + lipid A-core oligosaccharideSide 2.. Its function is as follows. Involved in lipopolysaccharide (LPS) biosynthesis. Translocates lipid A-core from the inner to the outer leaflet of the inner membrane. Transmembrane domains (TMD) form a pore in the inner membrane and the ATP-binding domain (NBD) is responsible for energy generation. The sequence is that of ATP-dependent lipid A-core flippase from Shewanella oneidensis (strain ATCC 700550 / JCM 31522 / CIP 106686 / LMG 19005 / NCIMB 14063 / MR-1).